Here is a 67-residue protein sequence, read N- to C-terminus: Large ribosomal subunit protein bL35 (67 aa).

This sequence belongs to the bacterial ribosomal protein bL35 family.

The sequence is that of Large ribosomal subunit protein bL35 from Brachyspira hyodysenteriae (strain ATCC 49526 / WA1).